Here is a 311-residue protein sequence, read N- to C-terminus: Meiotically up-regulated gene 146 protein (311 aa).

The protein localises to the cytoplasm. It is found in the nucleus. Functionally, has a role in sporulation. This chain is Meiotically up-regulated gene 146 protein (mug146), found in Schizosaccharomyces pombe (strain 972 / ATCC 24843) (Fission yeast).